Reading from the N-terminus, the 599-residue chain is Beta-glucuronidase (599 aa).

D160 and N407 together coordinate D-glucuronate. The active-site Proton donor is the E408. Residues N462, Y468, E501, W546, and K565 each contribute to the D-glucuronate site. E501 functions as the Nucleophile in the catalytic mechanism. Residues 563-565 (NHK) carry the N-K motif motif.

This sequence belongs to the glycosyl hydrolase 2 family.

The enzyme catalyses a beta-D-glucuronoside + H2O = D-glucuronate + an alcohol. With respect to regulation, inhibited by a set of synthetic compounds like thio-urea derivatives and analogs. Inhibitors of gut microbial beta-glucuronidases are expected to block the reactivation of glucuronidated cancer drugs, and to alleviate drug-induced GI toxicity. Functionally, displays beta-glucuronidase activity with the artificial substrate p-nitrophenyl-beta-D-glucuronide (PNPG). Is likely capable of scavenging glucuronate from a range of chemically distinct xenobiotic and endobiotic glucuronides present in the gastrointestinal (GI) tract, to be able to utilize these diverse sources of carbon. As part of the GI microbiome, this enzyme would be able to reactivate glucuronide drug conjugates, such reactivated compounds can significantly damage the GI tract. The polypeptide is Beta-glucuronidase (Streptococcus agalactiae serotype V (strain ATCC BAA-611 / 2603 V/R)).